A 312-amino-acid polypeptide reads, in one-letter code: Glyoxylate/hydroxypyruvate reductase A (312 aa).

Residue R227 is part of the active site. H275 (proton donor) is an active-site residue.

This sequence belongs to the D-isomer specific 2-hydroxyacid dehydrogenase family. GhrA subfamily.

It localises to the cytoplasm. It catalyses the reaction glycolate + NADP(+) = glyoxylate + NADPH + H(+). The catalysed reaction is (R)-glycerate + NAD(+) = 3-hydroxypyruvate + NADH + H(+). It carries out the reaction (R)-glycerate + NADP(+) = 3-hydroxypyruvate + NADPH + H(+). In terms of biological role, catalyzes the NADPH-dependent reduction of glyoxylate and hydroxypyruvate into glycolate and glycerate, respectively. In Klebsiella pneumoniae subsp. pneumoniae (strain ATCC 700721 / MGH 78578), this protein is Glyoxylate/hydroxypyruvate reductase A.